The sequence spans 396 residues: Phospholipase A1-II 4 (396 aa).

The Acyl-ester intermediate role is filled by S221. Catalysis depends on charge relay system residues S221, D282, and H319.

This sequence belongs to the AB hydrolase superfamily. Lipase family.

The protein resides in the cytoplasm. Acylhydrolase that catalyzes the hydrolysis of phospholipids at the sn-1 position. The chain is Phospholipase A1-II 4 from Oryza sativa subsp. japonica (Rice).